The following is a 279-amino-acid chain: Protein phosphatase 1 regulatory subunit 3E (279 aa).

A phosphoserine mark is found at S16 and S33. A disordered region spans residues R28–K86. Basic residues predominate over residues A51–R65. A Phosphoserine modification is found at S66. The PP1-binding motif signature appears at R87–F90. In terms of domain architecture, CBM21 spans A154 to R259. A glycogen-binding motif region spans residues G176–W198. Positions W248–Y256 are substrate-binding motif.

Expressed in skeletal muscle and heart with barely detectable levels in liver.

In terms of biological role, acts as a glycogen-targeting subunit for PP1. PP1 is involved in glycogen metabolism and contributes to the activation of glycogen synthase leading to an increase in glycogen synthesis. The sequence is that of Protein phosphatase 1 regulatory subunit 3E (PPP1R3E) from Homo sapiens (Human).